Here is a 151-residue protein sequence, read N- to C-terminus: 3-hydroxyacyl-[acyl-carrier-protein] dehydratase FabZ (151 aa).

Histidine 54 is an active-site residue.

It belongs to the thioester dehydratase family. FabZ subfamily. In terms of assembly, oligomer. Post-translationally, the N-terminus is blocked.

Its subcellular location is the cytoplasm. It carries out the reaction a (3R)-hydroxyacyl-[ACP] = a (2E)-enoyl-[ACP] + H2O. Involved in unsaturated fatty acids biosynthesis. Catalyzes the dehydration of short chain beta-hydroxyacyl-ACPs and long chain saturated and unsaturated beta-hydroxyacyl-ACPs. The protein is 3-hydroxyacyl-[acyl-carrier-protein] dehydratase FabZ of Escherichia coli O9:H4 (strain HS).